The chain runs to 141 residues: Large ribosomal subunit protein uL11 (141 aa).

The protein belongs to the universal ribosomal protein uL11 family. As to quaternary structure, part of the ribosomal stalk of the 50S ribosomal subunit. Interacts with L10 and the large rRNA to form the base of the stalk. L10 forms an elongated spine to which L12 dimers bind in a sequential fashion forming a multimeric L10(L12)X complex. Post-translationally, one or more lysine residues are methylated.

In terms of biological role, forms part of the ribosomal stalk which helps the ribosome interact with GTP-bound translation factors. The chain is Large ribosomal subunit protein uL11 from Microcystis aeruginosa (strain NIES-843 / IAM M-2473).